The sequence spans 214 residues: MGGRPPPSVGSVVVADTTMFTDAKLREVLGARSLEEAARIMARILARASRMGLTVYITPSVRAEIERFMLGNGVHPTTIARLMAWVRVKPPTTHELRLPAAMFRRYVETVRARLDKGLRVAEDHVRRALRSRDEEGDIVRSLREKYREYTRKGMLDSVEDVDTLLLALELGAAIVTSDEGLRRAAEDLGLTVLTPVELLEYILALEEEVKSVEE.

This sequence belongs to the HARP family.

It catalyses the reaction Endonucleolytic cleavage of RNA, removing 5'-extranucleotides from tRNA precursor.. RNA-free RNase P that catalyzes the removal of the 5'-leader sequence from pre-tRNA to produce the mature 5'-terminus. This is RNA-free ribonuclease P from Aeropyrum pernix (strain ATCC 700893 / DSM 11879 / JCM 9820 / NBRC 100138 / K1).